Reading from the N-terminus, the 409-residue chain is Nucleoprotein (409 aa).

Disordered stretches follow at residues 1–64 (MSAG…SNVK) and 167–197 (RNSS…VDDD). The segment at 30–161 (GTGQASWFQS…NNYRWDFIAL (132 aa)) is RNA-binding. The CoV N NTD domain maps to 32–157 (GQASWFQSLK…GGPDNNYRWD (126 aa)). Positions 176 to 197 (ENSRPGSRDSSRGRQRSRVDDD) are enriched in basic and acidic residues. At serine 192 the chain carries Phosphoserine; by host. The CoV N CTD domain maps to 217–333 (SKQKANEMAE…ECVDGVGTRP (117 aa)). The segment at 228–335 (KYHKRAIAPG…VDGVGTRPKD (108 aa)) is dimerization. An intrachain disulfide couples cysteine 322 to cysteine 325. The interval 327–409 (DGVGTRPKDD…GEGAFDDINI (83 aa)) is disordered. Residues 332–349 (RPKDDPTPRSRAASKDRN) are compositionally biased toward basic and acidic residues. Position 374 is a phosphothreonine; by host (threonine 374).

The protein belongs to the gammacoronavirus nucleocapsid protein family. In terms of assembly, homooligomer. Both monomeric and oligomeric forms interact with RNA. Interacts with protein M. Interacts with NSP3; this interaction serves to tether the genome to the newly translated replicase-transcriptase complex at a very early stage of infection. Post-translationally, ADP-ribosylated. The ADP-ribosylation is retained in the virion during infection. In terms of processing, phosphorylated on serine and threonine residues.

It is found in the virion. The protein localises to the host endoplasmic reticulum-Golgi intermediate compartment. It localises to the host Golgi apparatus. Packages the positive strand viral genome RNA into a helical ribonucleocapsid (RNP) and plays a fundamental role during virion assembly through its interactions with the viral genome and membrane protein M. Plays an important role in enhancing the efficiency of subgenomic viral RNA transcription as well as viral replication. This is Nucleoprotein from Gallus gallus (Chicken).